The chain runs to 217 residues: Proteasome subunit beta type-9 (217 aa).

A propeptide spans 1-18 (removed in mature form); that stretch reads MLGEEAEPQWISEEVKTG. The active-site Nucleophile is T19.

The protein belongs to the peptidase T1B family. In terms of assembly, the 26S proteasome consists of a 20S proteasome core and two 19S regulatory subunits. The 20S proteasome core is composed of 28 subunits that are arranged in four stacked rings, resulting in a barrel-shaped structure. The two end rings are each formed by seven alpha subunits, and the two central rings are each formed by seven beta subunits. The catalytic chamber with the active sites is on the inside of the barrel. Component of the immunoproteasome, where it displaces the equivalent housekeeping subunit PSMB6. In terms of processing, autocleaved. The resulting N-terminal Thr residue of the mature subunit is responsible for the nucleophile proteolytic activity.

It is found in the cytoplasm. It localises to the nucleus. It catalyses the reaction Cleavage of peptide bonds with very broad specificity.. Functionally, the proteasome is a multicatalytic proteinase complex which is characterized by its ability to cleave peptides with Arg, Phe, Tyr, Leu, and Glu adjacent to the leaving group at neutral or slightly basic pH. The proteasome has an ATP-dependent proteolytic activity. This subunit is involved in antigen processing to generate class I binding peptides. This Oryzias latipes (Japanese rice fish) protein is Proteasome subunit beta type-9 (psmb9).